A 261-amino-acid chain; its full sequence is Zaragozic acid A biosynthesis cluster protein 8 (261 aa).

Residues 242-254 (GTRSHTPAATQRR) are compositionally biased toward polar residues. Residues 242–261 (GTRSHTPAATQRRGQGRGCG) form a disordered region.

The protein operates within secondary metabolite biosynthesis. Its function is as follows. Part of the gene cluster that mediates the biosynthesis of squalestatin S1 (SQS1, also known as zaragozic acid A), a heavily oxidized fungal polyketide that offers potent cholesterol lowering activity by targeting squalene synthase (SS). SQS1 is composed of a 2,8-dioxobicyclic[3.2.1]octane-3,4,5-tricarboxyclic acid core that is connected to two lipophilic polyketide arms. These initial steps feature the priming of an unusual benzoic acid starter unit onto the highly reducing polyketide synthase clz14, followed by oxaloacetate extension and product release to generate a tricarboxylic acid containing product. The phenylalanine ammonia lyase (PAL) clz10 and the acyl-CoA ligase clz12 are involved in transforming phenylalanine into benzoyl-CoA. The citrate synthase-like protein clz17 is involved in connecting the C-alpha-carbons of the hexaketide chain and oxaloacetate to afford the tricarboxylic acid unit. The potential hydrolytic enzymes, clz11 and clz13, are in close proximity to pks2 and may participate in product release. On the other side, the tetraketide arm is synthesized by a the squalestatin tetraketide synthase clz2 and enzymatically esterified to the core in the last biosynthetic step, by the acetyltransferase clz6. The biosynthesis of the tetraketide must involve 3 rounds of chain extension. After the first and second rounds methyl-transfer occurs, and in all rounds of extension the ketoreductase and dehydratase are active. The enoyl reductase and C-MeT of clz2 are not active in the final round of extension. The acetyltransferase clz6 appears to have a broad substrate selectivity for its acyl CoA substrate, allowing the in vitro synthesis of novel squalestatins. The biosynthesis of SQS1 requires several oxidative steps likely performed by oxidoreductases clz3, clz15 and clz16. Finally, in support of the identification of the cluster as being responsible for SQS1 production, the cluster contains a gene encoding a putative squalene synthase (SS) clz20, suggesting a likely mechanism for self-resistance. This is Zaragozic acid A biosynthesis cluster protein 8 from Cochliobolus lunatus (Filamentous fungus).